Consider the following 117-residue polypeptide: Prefoldin subunit beta (117 aa).

It belongs to the prefoldin subunit beta family. In terms of assembly, heterohexamer of two alpha and four beta subunits.

The protein resides in the cytoplasm. Its function is as follows. Molecular chaperone capable of stabilizing a range of proteins. Seems to fulfill an ATP-independent, HSP70-like function in archaeal de novo protein folding. The protein is Prefoldin subunit beta of Methanosarcina barkeri (strain Fusaro / DSM 804).